The following is a 264-amino-acid chain: MRLRPLPLVVVPGLLQLLFCDSKEVVHATEGLDWEDKDAPGTLVGNVVHSRIISPLRLFVKQSPVPKPGPMAYADSMENFWDWLANITEIQEPLARTKRRPIVKTGKFKKMFGWGDFHSNIKTVKLNLLITGKIVDHGNGTFSVYFRHNSTGLGNVSVSLVPPSKVVEFEVSPQSTLETKESKSFNCRIEYEKTDRAKKTALCNFDPSKICYQEQTQSHVSWLCSKPFKVICIYIAFYSVDYKLVQKVCPDYNYHSETPYLSSG.

An N-terminal signal peptide occupies residues 1 to 22 (MRLRPLPLVVVPGLLQLLFCDS). Residues 23 to 90 (KEVVHATEGL…WDWLANITEI (68 aa)) form an II region. N-linked (GlcNAc...) asparagine glycosylation is found at asparagine 86, asparagine 139, asparagine 149, and asparagine 155. An III region spans residues 91 to 169 (QEPLARTKRR…LVPPSKVVEF (79 aa)). Positions 170-178 (EVSPQSTLE) are IV (linker domain). The v (Cys-rich) stretch occupies residues 179 to 264 (TKESKSFNCR…HSETPYLSSG (86 aa)).

It belongs to the neurexophilin family. In terms of processing, may be proteolytically processed at the boundary between the N-terminal non-conserved and the central conserved domain in neuron-like cells. In terms of tissue distribution, expressed in brain and kidney.

The protein localises to the secreted. In terms of biological role, may be signaling molecules that resemble neuropeptides and that act by binding to alpha-neurexins and possibly other receptors. The sequence is that of Neurexophilin-2 (NXPH2) from Homo sapiens (Human).